Here is a 199-residue protein sequence, read N- to C-terminus: MAFLFISNEWKYQQLIFKINCWHFCYYPKNYLGGSILSKRLFIPPSACRIDLSVFPWAFICSPWNFCSTWSSLICSPCFSTVWVSLLICSPWRSTTWTNWLICSPCFSTVWVNLLICSPWAAKVVSIFVSRWLFEFLYSLNSLRVTYSVFTGITGLLSLNCLLNLPENSTLLFSGLMMYQPEKVPFLVFFTMSWNSFSL.

4 consecutive transmembrane segments (helical) span residues 41 to 61 (LFIP…AFIC), 72 to 92 (SLIC…CSPW), 109 to 129 (TVWV…SIFV), and 145 to 165 (VTYS…LLNL).

To M.pneumoniae MPN_037.

It is found in the cell membrane. This is an uncharacterized protein from Mycoplasma pneumoniae (strain ATCC 29342 / M129 / Subtype 1) (Mycoplasmoides pneumoniae).